The chain runs to 330 residues: Cytoplasmic envelopment protein 2 (330 aa).

Belongs to the herpesviridae cytoplasmic envelopment protein 2 family. In terms of assembly, interacts with cytoplasmic envelopment protein 3 and with the capsid.

The protein resides in the virion tegument. It is found in the host cytoplasm. The protein localises to the host nucleus. Plays a critical role in cytoplasmic virus egress. Participates in the final step of tegumentation and envelope acquisition within the host cytoplasm by directly interacting with the capsid. Upon virion binding to target cell, a signaling cascade is triggered to disrupt the interaction with the capsid, thereby preparing capsid uncoating. The sequence is that of Cytoplasmic envelopment protein 2 (33) from Saimiriine herpesvirus 2 (strain 11) (SaHV-2).